The primary structure comprises 689 residues: Glycine--tRNA ligase beta subunit (689 aa).

Belongs to the class-II aminoacyl-tRNA synthetase family. As to quaternary structure, tetramer of two alpha and two beta subunits.

The protein localises to the cytoplasm. The catalysed reaction is tRNA(Gly) + glycine + ATP = glycyl-tRNA(Gly) + AMP + diphosphate. The polypeptide is Glycine--tRNA ligase beta subunit (Cronobacter sakazakii (strain ATCC BAA-894) (Enterobacter sakazakii)).